A 227-amino-acid chain; its full sequence is UPF0173 metal-dependent hydrolase BCAH187_A4741 (227 aa).

The protein belongs to the UPF0173 family.

This Bacillus cereus (strain AH187) protein is UPF0173 metal-dependent hydrolase BCAH187_A4741.